The sequence spans 150 residues: AN1-type zinc finger protein TMC1 (150 aa).

Positions 1–82 are disordered; that stretch reads MSDINEIEIP…TKKTTKKKKK (82 aa). An N-acetylserine modification is found at Ser-2. Positions 23-33 are enriched in basic and acidic residues; sequence DPMHEIEDKST. Phosphoserine occurs at positions 43 and 54. Positions 53 to 70 are enriched in low complexity; it reads NSRSSSNSSVTSTGQSSR. Positions 71 to 82 are enriched in basic residues; it reads RVTKKTTKKKKK. The AN1-type zinc-finger motif lies at 79-128; sequence KKKKNACYFDTCSSAASKFIGDCNFCKGHFCSKHRLMENHACNGLTSCKE. Zn(2+) is bound by residues Cys-85, Cys-90, Cys-101, Cys-104, Cys-109, His-112, His-118, and Cys-120.

The protein resides in the nucleus. Its function is as follows. May have a role in protecting cells from metalloid-induced proteotoxicity. The chain is AN1-type zinc finger protein TMC1 from Saccharomyces cerevisiae (strain ATCC 204508 / S288c) (Baker's yeast).